A 500-amino-acid chain; its full sequence is L-arabinose isomerase (500 aa).

Mn(2+)-binding residues include Glu-306, Glu-333, His-349, and His-448.

This sequence belongs to the arabinose isomerase family. Mn(2+) is required as a cofactor.

The catalysed reaction is beta-L-arabinopyranose = L-ribulose. Its pathway is carbohydrate degradation; L-arabinose degradation via L-ribulose; D-xylulose 5-phosphate from L-arabinose (bacterial route): step 1/3. In terms of biological role, catalyzes the conversion of L-arabinose to L-ribulose. The sequence is that of L-arabinose isomerase from Shewanella baltica (strain OS223).